The primary structure comprises 396 residues: Interleukin enhancer-binding factor 2 homolog (396 aa).

The DZF domain occupies 22–379; that stretch reads KTFVPRHPFD…KKEGDLEEDI (358 aa). Positions 367–396 are disordered; sequence PTDKKEGDLEEDIDMIENENEEEGSDDGAE. Acidic residues predominate over residues 374–396; that stretch reads DLEEDIDMIENENEEEGSDDGAE.

It localises to the nucleus. May regulate transcription of undefined genes. The sequence is that of Interleukin enhancer-binding factor 2 homolog from Drosophila melanogaster (Fruit fly).